The sequence spans 139 residues: D-ribose pyranase (139 aa).

His-20 functions as the Proton donor in the catalytic mechanism. Substrate-binding positions include Asp-28, His-106, and 128–130 (YAN).

It belongs to the RbsD / FucU family. RbsD subfamily. In terms of assembly, homodecamer.

The protein resides in the cytoplasm. It catalyses the reaction beta-D-ribopyranose = beta-D-ribofuranose. Its pathway is carbohydrate metabolism; D-ribose degradation; D-ribose 5-phosphate from beta-D-ribopyranose: step 1/2. In terms of biological role, catalyzes the interconversion of beta-pyran and beta-furan forms of D-ribose. This Pectobacterium atrosepticum (strain SCRI 1043 / ATCC BAA-672) (Erwinia carotovora subsp. atroseptica) protein is D-ribose pyranase.